The sequence spans 94 residues: Large ribosomal subunit protein uL23 (94 aa).

Belongs to the universal ribosomal protein uL23 family. Part of the 50S ribosomal subunit. Contacts protein L29, and trigger factor when it is bound to the ribosome.

Its function is as follows. One of the early assembly proteins it binds 23S rRNA. One of the proteins that surrounds the polypeptide exit tunnel on the outside of the ribosome. Forms the main docking site for trigger factor binding to the ribosome. The polypeptide is Large ribosomal subunit protein uL23 (Lysinibacillus sphaericus (strain C3-41)).